The primary structure comprises 290 residues: Feruloyl esterase D (290 aa).

An N-terminal signal peptide occupies residues 1–25 (MAGLHSRLTTFLLLLLSALPAIAAA). Residues 260-280 (HGGDHNPSQRDPGQNDPFAPR) form a disordered region.

This sequence belongs to the serine esterase family.

It localises to the secreted. The enzyme catalyses feruloyl-polysaccharide + H2O = ferulate + polysaccharide.. In terms of biological role, involved in degradation of plant cell walls. Hydrolyzes the feruloyl-arabinose ester bond in arabinoxylans as well as the feruloyl-galactose and feruloyl-arabinose ester bonds in pectin. Active against methyl esters of ferulate (MFA), sinapate (MSA), caffeate (MCA) and p-coumarate (MpCA). In Neurospora crassa (strain ATCC 24698 / 74-OR23-1A / CBS 708.71 / DSM 1257 / FGSC 987), this protein is Feruloyl esterase D.